The sequence spans 143 residues: Large ribosomal subunit protein eL28y (143 aa).

It belongs to the eukaryotic ribosomal protein eL28 family.

The polypeptide is Large ribosomal subunit protein eL28y (RPL28C) (Arabidopsis thaliana (Mouse-ear cress)).